The following is a 254-amino-acid chain: Small ribosomal subunit protein uS2 (254 aa).

The protein belongs to the universal ribosomal protein uS2 family.

The sequence is that of Small ribosomal subunit protein uS2 from Legionella pneumophila subsp. pneumophila (strain Philadelphia 1 / ATCC 33152 / DSM 7513).